Consider the following 736-residue polypeptide: Phosphoribosylformylglycinamidine synthase subunit PurL (736 aa).

His-50 is an active-site residue. Residues Tyr-53 and Lys-92 each contribute to the ATP site. Glu-94 contacts Mg(2+). Substrate-binding positions include 95–98 (SHNH) and Arg-117. The Proton acceptor role is filled by His-96. Asp-118 serves as a coordination point for Mg(2+). Gln-241 serves as a coordination point for substrate. Asp-269 lines the Mg(2+) pocket. 313-315 (ESQ) is a binding site for substrate. Residues Asp-495 and Gly-532 each contribute to the ATP site. Asn-533 contacts Mg(2+). Substrate is bound at residue Ser-535.

The protein belongs to the FGAMS family. In terms of assembly, monomer. Part of the FGAM synthase complex composed of 1 PurL, 1 PurQ and 2 PurS subunits.

It localises to the cytoplasm. The enzyme catalyses N(2)-formyl-N(1)-(5-phospho-beta-D-ribosyl)glycinamide + L-glutamine + ATP + H2O = 2-formamido-N(1)-(5-O-phospho-beta-D-ribosyl)acetamidine + L-glutamate + ADP + phosphate + H(+). It participates in purine metabolism; IMP biosynthesis via de novo pathway; 5-amino-1-(5-phospho-D-ribosyl)imidazole from N(2)-formyl-N(1)-(5-phospho-D-ribosyl)glycinamide: step 1/2. Part of the phosphoribosylformylglycinamidine synthase complex involved in the purines biosynthetic pathway. Catalyzes the ATP-dependent conversion of formylglycinamide ribonucleotide (FGAR) and glutamine to yield formylglycinamidine ribonucleotide (FGAM) and glutamate. The FGAM synthase complex is composed of three subunits. PurQ produces an ammonia molecule by converting glutamine to glutamate. PurL transfers the ammonia molecule to FGAR to form FGAM in an ATP-dependent manner. PurS interacts with PurQ and PurL and is thought to assist in the transfer of the ammonia molecule from PurQ to PurL. This Bartonella tribocorum (strain CIP 105476 / IBS 506) protein is Phosphoribosylformylglycinamidine synthase subunit PurL.